Consider the following 457-residue polypeptide: tRNA (guanine(37)-N(1))-methyltransferase (457 aa).

Residues His-225, 263–264 (DL), 291–292 (DG), and Asn-358 each bind S-adenosyl-L-methionine.

Belongs to the class I-like SAM-binding methyltransferase superfamily. TRM5/TYW2 family. In terms of assembly, monomer.

It is found in the mitochondrion matrix. Its subcellular location is the nucleus. The protein localises to the cytoplasm. The enzyme catalyses guanosine(37) in tRNA + S-adenosyl-L-methionine = N(1)-methylguanosine(37) in tRNA + S-adenosyl-L-homocysteine + H(+). In terms of biological role, specifically methylates the N1 position of guanosine-37 in various cytoplasmic and mitochondrial tRNAs. Methylation is not dependent on the nature of the nucleoside 5' of the target nucleoside. This is the first step in the biosynthesis of wybutosine (yW), a modified base adjacent to the anticodon of tRNAs and required for accurate decoding. This is tRNA (guanine(37)-N(1))-methyltransferase from Coprinopsis cinerea (strain Okayama-7 / 130 / ATCC MYA-4618 / FGSC 9003) (Inky cap fungus).